The following is a 302-amino-acid chain: Pseudouridine-5'-phosphate glycosidase (302 aa).

Catalysis depends on E25, which acts as the Proton donor. Residues K86 and V106 each contribute to the substrate site. D138 serves as a coordination point for Mn(2+). 140 to 142 (SAD) contributes to the substrate binding site. K159 (nucleophile) is an active-site residue.

Belongs to the pseudouridine-5'-phosphate glycosidase family. Homotrimer. Mn(2+) serves as cofactor.

It carries out the reaction D-ribose 5-phosphate + uracil = psi-UMP + H2O. In terms of biological role, catalyzes the reversible cleavage of pseudouridine 5'-phosphate (PsiMP) to ribose 5-phosphate and uracil. Functions biologically in the cleavage direction, as part of a pseudouridine degradation pathway. This is Pseudouridine-5'-phosphate glycosidase from Glaesserella parasuis serovar 5 (strain SH0165) (Haemophilus parasuis).